We begin with the raw amino-acid sequence, 494 residues long: MKKQAFSSEQYLNLQRDHILERINQFDGKLYLEFGGKMLEDFHAARVLPGYEPDNKIKLLQEFKDQVEVVIAINASNIEHSKARGDLGISYDQEVLRLIDKFNELNIYVGSVVITQYSGQPAADAFRNQLEKNGITSYIHYPIKGYPTDINHIISPEGMGKNDYIKTSRNLIVVTAPGPGSGKLATCLSNMYHDQINGIKSGYAKFETFPVWNLPLHHPVNLAYEAATADLDDVNMIDPFHLETYGKTTVNYNRDIEIFPVLKRMLERILGESPYASPTDMGVNMVGFAITDDEAAKEASKQEIIRRYYQTVLDFKNERVPETAVKKIELLMNDLGITPEDRQVVVAARAKAEETGGSALALELPNGQIVTGKNSELFGPTAAALINAIKTSAGIDKDTKLIEPEVVKPIQGLKIDHLGSRNPRLHSNEILIALAITAANNVDAARAMEELDNLKGSEAHSTIILTDEDKNVLRKLGINVTFDPYYQYDKLYRK.

The protein belongs to the UPF0371 family.

In Streptococcus thermophilus (strain ATCC BAA-491 / LMD-9), this protein is UPF0371 protein STER_1332.